The chain runs to 129 residues: Small ribosomal subunit protein uS9 (129 aa).

Belongs to the universal ribosomal protein uS9 family.

The protein is Small ribosomal subunit protein uS9 of Helicobacter hepaticus (strain ATCC 51449 / 3B1).